A 492-amino-acid polypeptide reads, in one-letter code: Probable glycine dehydrogenase (decarboxylating) subunit 2 (492 aa).

N6-(pyridoxal phosphate)lysine is present on lysine 274.

This sequence belongs to the GcvP family. C-terminal subunit subfamily. In terms of assembly, the glycine cleavage system is composed of four proteins: P, T, L and H. In this organism, the P 'protein' is a heterodimer of two subunits. Requires pyridoxal 5'-phosphate as cofactor.

It carries out the reaction N(6)-[(R)-lipoyl]-L-lysyl-[glycine-cleavage complex H protein] + glycine + H(+) = N(6)-[(R)-S(8)-aminomethyldihydrolipoyl]-L-lysyl-[glycine-cleavage complex H protein] + CO2. In terms of biological role, the glycine cleavage system catalyzes the degradation of glycine. The P protein binds the alpha-amino group of glycine through its pyridoxal phosphate cofactor; CO(2) is released and the remaining methylamine moiety is then transferred to the lipoamide cofactor of the H protein. The polypeptide is Probable glycine dehydrogenase (decarboxylating) subunit 2 (Staphylococcus haemolyticus (strain JCSC1435)).